The following is a 223-amino-acid chain: Chalcone--flavanone isomerase 2 (223 aa).

The substrate site is built by Thr-41, Asn-106, and Ser-183.

This sequence belongs to the chalcone isomerase family.

The catalysed reaction is a chalcone = a flavanone.. It functions in the pathway secondary metabolite biosynthesis; flavonoid biosynthesis. Catalyzes the intramolecular cyclization of bicyclic chalcones into tricyclic (S)-flavanones. Responsible for the isomerization of 4,2',4',6'-tetrahydroxychalcone (also termed chalcone) into naringenin. The sequence is that of Chalcone--flavanone isomerase 2 (CHI2) from Arabidopsis thaliana (Mouse-ear cress).